The following is a 421-amino-acid chain: Osmoprotective compounds-binding protein GgtB (421 aa).

An N-terminal signal peptide occupies residues 1–18 (MKFFKITTLIISLIVLTS). Cysteine 19 is lipidated: N-palmitoyl cysteine. Cysteine 19 carries the S-diacylglycerol cysteine lipid modification.

The protein belongs to the bacterial solute-binding protein 1 family. As to quaternary structure, the complex is composed of two ATP-binding proteins (GgtA), two transmembrane proteins (GgtC and GgtD) and a solute-binding protein (GgtB).

It is found in the cell membrane. Its function is as follows. Part of the ABC transporter complex GgtABCD involved in the uptake of the osmoprotective compounds glucosylglycerol (GG), sucrose and trehalose. Binds glucosylglycerol and exhibits a somewhat lower affinity towards sucrose and a substantially lower affinity towards trehalose. This chain is Osmoprotective compounds-binding protein GgtB, found in Synechocystis sp. (strain ATCC 27184 / PCC 6803 / Kazusa).